We begin with the raw amino-acid sequence, 360 residues long: Peptide chain release factor 1 (360 aa).

At glutamine 237 the chain carries N5-methylglutamine.

Belongs to the prokaryotic/mitochondrial release factor family. Methylated by PrmC. Methylation increases the termination efficiency of RF1.

It localises to the cytoplasm. Its function is as follows. Peptide chain release factor 1 directs the termination of translation in response to the peptide chain termination codons UAG and UAA. In Pseudomonas syringae pv. tomato (strain ATCC BAA-871 / DC3000), this protein is Peptide chain release factor 1.